The following is a 208-amino-acid chain: FMN-dependent NADH:quinone oxidoreductase (208 aa).

Residues H10, 17-19 (SRS), 104-107 (MWNL), 148-153 (SNGGFY), and D184 each bind FMN.

The protein belongs to the azoreductase type 1 family. As to quaternary structure, homodimer. Requires FMN as cofactor.

It carries out the reaction 2 a quinone + NADH + H(+) = 2 a 1,4-benzosemiquinone + NAD(+). The catalysed reaction is N,N-dimethyl-1,4-phenylenediamine + anthranilate + 2 NAD(+) = 2-(4-dimethylaminophenyl)diazenylbenzoate + 2 NADH + 2 H(+). In terms of biological role, quinone reductase that provides resistance to thiol-specific stress caused by electrophilic quinones. Functionally, also exhibits azoreductase activity. Catalyzes the reductive cleavage of the azo bond in aromatic azo compounds to the corresponding amines. Requires NADH, but not NADPH, as an electron donor for its activity. The enzyme can also reduce a wide range of sulfonated azo dyes. The substrate preference order is methyl Red &gt; Orange II &gt; Ponceau BS &gt; Ponceau S &gt; Orange G &gt; Amaranth. In Enterococcus faecalis (strain ATCC 700802 / V583), this protein is FMN-dependent NADH:quinone oxidoreductase.